A 678-amino-acid chain; its full sequence is MAAPGPLPAAALSPGAPTPRELMHGVAGVTSRAGRDREAGSVLPAGNRGARKASRRSSSRSMSRDNKFSKKDCLSIRNVVASIQTKEGLNLKLISGDVLYIWADVIVNSVPMNLQLGGGPLSRAFLQKAGPMLQKELDDRRRETEEKVGNIFMTSGCNLDCKAVLHAVAPYWNNGAETSWQIMANIIKKCLTTVEVLSFSSITFPMIGTGSLQFPKAVFAKLILSEVFEYSSSTRPITSPLQEVHFLVYTNDDEGCQAFLDEFTNWSRINPNKARIPMAGDTQGVVGTVSKPCFTAYEMKIGAITFQVATGDIATEQVDVIVNSTARTFNRKSGVSRAILEGAGQAVESECAVLAAQPHRDFIITPGGCLKCKIIIHVPGGKDVRKTVTSVLEECEQRKYTSVSLPAIGTGNAGKNPITVADNIIDAIVDFSSQHSTPSLKTVKVVIFQPELLNIFYDSMKKRDLSASLNFQSTFSMTTCNLPEHWTDMNHQLFCMVQLEPGQSEYNTIKDKFTRTCSSYAIEKIERIQNAFLWQSYQVKKRQMDIKNDHKNNERLLFHGTDADSVPYVNQHGFNRSCAGKNAVSYGKGTYFAVDASYSAKDTYSKPDSNGRKHMYVVRVLTGVFTKGRAGLVTPPPKNPHNPTDLFDSVTNNTRSPKLFVVFFDNQAYPEYLITFTA.

Low complexity predominate over residues 1–19 (MAAPGPLPAAALSPGAPTP). The disordered stretch occupies residues 1 to 67 (MAAPGPLPAA…SSRSMSRDNK (67 aa)). A compositionally biased stretch (basic residues) spans 49 to 58 (GARKASRRSS). Macro domains are found at residues 78 to 267 (NVVA…TNWS) and 293 to 464 (CFTA…KKRD). Residues 312–313 (DI), 324–325 (ST), arginine 331, valine 335, 409–413 (GTGNA), and glutamine 449 each bind substrate. Positions 482–678 (LPEHWTDMNH…YPEYLITFTA (197 aa)) constitute a PARP catalytic domain.

Belongs to the ARTD/PARP family.

It is found in the nucleus. It catalyses the reaction L-aspartyl-[protein] + NAD(+) = 4-O-(ADP-D-ribosyl)-L-aspartyl-[protein] + nicotinamide. It carries out the reaction L-glutamyl-[protein] + NAD(+) = 5-O-(ADP-D-ribosyl)-L-glutamyl-[protein] + nicotinamide. In terms of biological role, mono-ADP-ribosyltransferase that mediates mono-ADP-ribosylation of target proteins. Acts as a negative regulator of transcription. This chain is Protein mono-ADP-ribosyltransferase PARP15, found in Homo sapiens (Human).